We begin with the raw amino-acid sequence, 345 residues long: NADH-ubiquinone oxidoreductase chain 2 (345 aa).

A run of 10 helical transmembrane segments spans residues 1–21 (MNPITLAIIYFTIFLGPVITM), 25–45 (NLMLMWVGLEFSLLAIIPMLI), 56–76 (ATKYFVTQATASMIILLAIVL), 92–114 (GLILNMTLMALSMKLGLAPFHFW), 149–171 (LNSTIILMLAITSIFMGAWGGLN), 178–198 (IMAYSSIAHMGWMLAILPYNP), 200–220 (LTLLNLMIYIILTAPMFMALM), 241–261 (LTMISLMLLSLGGLPPLTGFL), 274–294 (NCLIMATLMAMMALLNLFFYT), and 324–344 (LMFSTLAIMSTMTLPLAPQLI).

Belongs to the complex I subunit 2 family. In terms of assembly, core subunit of respiratory chain NADH dehydrogenase (Complex I) which is composed of 45 different subunits. Interacts with TMEM242.

Its subcellular location is the mitochondrion inner membrane. The enzyme catalyses a ubiquinone + NADH + 5 H(+)(in) = a ubiquinol + NAD(+) + 4 H(+)(out). In terms of biological role, core subunit of the mitochondrial membrane respiratory chain NADH dehydrogenase (Complex I) which catalyzes electron transfer from NADH through the respiratory chain, using ubiquinone as an electron acceptor. Essential for the catalytic activity and assembly of complex I. The chain is NADH-ubiquinone oxidoreductase chain 2 from Mus musculus (Mouse).